A 404-amino-acid chain; its full sequence is Omega-3 fatty acid desaturase, chloroplastic (404 aa).

Residues 28–50 (TVDSSSSPPIEEEPKTQRFDPGA) form a disordered region. The Histidine box-1 signature appears at 121–125 (HDCGH). The short motif at 157–161 (HRTHH) is the Histidine box-2 element. The Histidine box-3 signature appears at 324–328 (HVIHH).

This sequence belongs to the fatty acid desaturase type 1 family.

The protein resides in the plastid. It localises to the chloroplast membrane. It participates in lipid metabolism; polyunsaturated fatty acid biosynthesis. Its function is as follows. Chloroplast omega-3 fatty acid desaturase introduces the third double bond in the biosynthesis of 16:3 and 18:3 fatty acids, important constituents of plant membranes. It is thought to use ferredoxin as an electron donor and to act on fatty acids esterified to galactolipids, sulfolipids and phosphatidylglycerol. The polypeptide is Omega-3 fatty acid desaturase, chloroplastic (FAD7) (Brassica napus (Rape)).